Consider the following 370-residue polypeptide: S-adenosylmethionine:tRNA ribosyltransferase-isomerase (370 aa).

This sequence belongs to the QueA family. Monomer.

It is found in the cytoplasm. The enzyme catalyses 7-aminomethyl-7-carbaguanosine(34) in tRNA + S-adenosyl-L-methionine = epoxyqueuosine(34) in tRNA + adenine + L-methionine + 2 H(+). It participates in tRNA modification; tRNA-queuosine biosynthesis. Its function is as follows. Transfers and isomerizes the ribose moiety from AdoMet to the 7-aminomethyl group of 7-deazaguanine (preQ1-tRNA) to give epoxyqueuosine (oQ-tRNA). This chain is S-adenosylmethionine:tRNA ribosyltransferase-isomerase, found in Synechococcus sp. (strain WH7803).